A 95-amino-acid chain; its full sequence is Phosphoribosyl-ATP pyrophosphatase (95 aa).

It belongs to the PRA-PH family.

It localises to the cytoplasm. It carries out the reaction 1-(5-phospho-beta-D-ribosyl)-ATP + H2O = 1-(5-phospho-beta-D-ribosyl)-5'-AMP + diphosphate + H(+). It participates in amino-acid biosynthesis; L-histidine biosynthesis; L-histidine from 5-phospho-alpha-D-ribose 1-diphosphate: step 2/9. In Sulfolobus acidocaldarius (strain ATCC 33909 / DSM 639 / JCM 8929 / NBRC 15157 / NCIMB 11770), this protein is Phosphoribosyl-ATP pyrophosphatase.